A 255-amino-acid polypeptide reads, in one-letter code: Thiazole synthase (255 aa).

Lys96 (schiff-base intermediate with DXP) is an active-site residue. Residues Gly157, 184-185 (AG), and 206-207 (NT) each bind 1-deoxy-D-xylulose 5-phosphate.

It belongs to the ThiG family. Homotetramer. Forms heterodimers with either ThiH or ThiS.

The protein localises to the cytoplasm. It carries out the reaction [ThiS sulfur-carrier protein]-C-terminal-Gly-aminoethanethioate + 2-iminoacetate + 1-deoxy-D-xylulose 5-phosphate = [ThiS sulfur-carrier protein]-C-terminal Gly-Gly + 2-[(2R,5Z)-2-carboxy-4-methylthiazol-5(2H)-ylidene]ethyl phosphate + 2 H2O + H(+). It participates in cofactor biosynthesis; thiamine diphosphate biosynthesis. Functionally, catalyzes the rearrangement of 1-deoxy-D-xylulose 5-phosphate (DXP) to produce the thiazole phosphate moiety of thiamine. Sulfur is provided by the thiocarboxylate moiety of the carrier protein ThiS. In vitro, sulfur can be provided by H(2)S. This is Thiazole synthase from Clostridium acetobutylicum (strain ATCC 824 / DSM 792 / JCM 1419 / IAM 19013 / LMG 5710 / NBRC 13948 / NRRL B-527 / VKM B-1787 / 2291 / W).